Here is a 284-residue protein sequence, read N- to C-terminus: 2,3,4,5-tetrahydropyridine-2,6-dicarboxylate N-succinyltransferase (284 aa).

Substrate is bound by residues Arg111 and Asp148.

It belongs to the transferase hexapeptide repeat family. In terms of assembly, homotrimer.

Its subcellular location is the cytoplasm. It catalyses the reaction (S)-2,3,4,5-tetrahydrodipicolinate + succinyl-CoA + H2O = (S)-2-succinylamino-6-oxoheptanedioate + CoA. It participates in amino-acid biosynthesis; L-lysine biosynthesis via DAP pathway; LL-2,6-diaminopimelate from (S)-tetrahydrodipicolinate (succinylase route): step 1/3. This Agrobacterium fabrum (strain C58 / ATCC 33970) (Agrobacterium tumefaciens (strain C58)) protein is 2,3,4,5-tetrahydropyridine-2,6-dicarboxylate N-succinyltransferase.